The primary structure comprises 365 residues: Ribosomal RNA large subunit methyltransferase M (365 aa).

Residues S187, 220–223 (CPGG), D239, D259, and D276 each bind S-adenosyl-L-methionine. K305 (proton acceptor) is an active-site residue.

The protein belongs to the class I-like SAM-binding methyltransferase superfamily. RNA methyltransferase RlmE family. RlmM subfamily. As to quaternary structure, monomer.

Its subcellular location is the cytoplasm. It carries out the reaction cytidine(2498) in 23S rRNA + S-adenosyl-L-methionine = 2'-O-methylcytidine(2498) in 23S rRNA + S-adenosyl-L-homocysteine + H(+). Functionally, catalyzes the 2'-O-methylation at nucleotide C2498 in 23S rRNA. In Psychromonas ingrahamii (strain DSM 17664 / CCUG 51855 / 37), this protein is Ribosomal RNA large subunit methyltransferase M.